A 459-amino-acid chain; its full sequence is FAD-dependent monooxygenase CTB5 (459 aa).

Residues S10–Q187 form the FAD-binding PCMH-type domain.

This sequence belongs to the oxygen-dependent FAD-linked oxidoreductase family.

It functions in the pathway mycotoxin biosynthesis. Functionally, FAD-dependent monooxygenase; part of the gene cluster that mediates the biosynthesis of cercosporin, a light-activated, non-host-selective toxin. The perylenequinone chromophore of cercosporin absorbs light energy to attain an electronically-activated triplet state and produces active oxygen species such as the hydroxyl radical, superoxide, hydrogen peroxide or singlet oxygen upon reaction with oxygen molecules. These reactive oxygen species cause damage to various cellular components including lipids, proteins and nucleic acids. The first step of cercosporin biosynthesis is performed by the polyketide synthase CTB1 which catalyzes the formation of nor-toralactone. The starter unit acyltransferase (SAT) domain of CTB1 initiates polyketide extension by the selective utilization of acetyl-CoA, which is elongated to the heptaketide in the beta-ketoacyl synthase (KS) domain by successive condensations with six malonyl units introduced by the malonyl acyltransferase (MAT) domain. The product template (PT) domain catalyzes C4-C9 and C2-C11 aldol cyclizations and dehydrations to a trihydroxynaphthalene, which is thought to be delivered to the thioesterase (TE) domain for product release. The bifunctional enzyme CTB3 then methylates nor-toralactone to toralactone before conducting an unusual oxidative aromatic ring opening. The O-methyltransferase CTB2 further methylates the nascent OH-6 of the CBT3 product, blocking further oxidation at this site before the reductase CTB6 reduces the 2-oxopropyl ketone at position C7, giving naphthalene. The FAD-dependent monooxygenase CTB5 in concert with the multicopper oxidase CTB12 are responsible for homodimerization of naphthalene with CTB7 installing the dioxepine moiety, finally producing cercosporin. The fasciclin domain-containing protein CTB11 might act with CTB5 and CTB12 whereas the roles of CTB9 and CTB10 have still to be elucidated. The polypeptide is FAD-dependent monooxygenase CTB5 (Cercospora nicotianae (Barn spot disease fungus)).